A 119-amino-acid polypeptide reads, in one-letter code: MARVKRGVTAHAKHKKVYKAAEGFRGRRKNTIRAAKAAVDKAQQYAYVGRKLKKRNFRALWIQRINAAVRPFGLTYSRFINGLAKSGVVIDRKVLSDLAIHEPAAFQAIAEKAKAALAA.

This sequence belongs to the bacterial ribosomal protein bL20 family.

Binds directly to 23S ribosomal RNA and is necessary for the in vitro assembly process of the 50S ribosomal subunit. It is not involved in the protein synthesizing functions of that subunit. This chain is Large ribosomal subunit protein bL20, found in Afipia carboxidovorans (strain ATCC 49405 / DSM 1227 / KCTC 32145 / OM5) (Oligotropha carboxidovorans).